Reading from the N-terminus, the 179-residue chain is Large ribosomal subunit protein uL5 (179 aa).

Belongs to the universal ribosomal protein uL5 family. Part of the 50S ribosomal subunit; part of the 5S rRNA/L5/L18/L25 subcomplex. Contacts the 5S rRNA and the P site tRNA. Forms a bridge to the 30S subunit in the 70S ribosome.

Functionally, this is one of the proteins that bind and probably mediate the attachment of the 5S RNA into the large ribosomal subunit, where it forms part of the central protuberance. In the 70S ribosome it contacts protein S13 of the 30S subunit (bridge B1b), connecting the 2 subunits; this bridge is implicated in subunit movement. Contacts the P site tRNA; the 5S rRNA and some of its associated proteins might help stabilize positioning of ribosome-bound tRNAs. The chain is Large ribosomal subunit protein uL5 from Sodalis glossinidius (strain morsitans).